Reading from the N-terminus, the 397-residue chain is GTPase Obg (397 aa).

Residues 1 to 159 form the Obg domain; that stretch reads MKFVDEAEIR…RMLKLELMLL (159 aa). Positions 22 to 44 are disordered; the sequence is SFRREKYVPDGGPDGGDGGDGGS. Gly residues predominate over residues 33-43; it reads GPDGGDGGDGG. An OBG-type G domain is found at 160-333; it reads ADVGLLGMPN…LCIKVMDFIE (174 aa). Residues 166-173, 191-195, 213-216, 283-286, and 314-316 contribute to the GTP site; these read GMPNAGKS, FTTLV, DIPG, NKVD, and SAV. 2 residues coordinate Mg(2+): Ser173 and Thr193. The tract at residues 359 to 389 is disordered; sequence TVENYEDDDDFDDDDDDDFDGDDDDDFDGDD. Residues 361 to 389 show a composition bias toward acidic residues; sequence ENYEDDDDFDDDDDDDFDGDDDDDFDGDD.

Belongs to the TRAFAC class OBG-HflX-like GTPase superfamily. OBG GTPase family. In terms of assembly, monomer. The cofactor is Mg(2+).

Its subcellular location is the cytoplasm. An essential GTPase which binds GTP, GDP and possibly (p)ppGpp with moderate affinity, with high nucleotide exchange rates and a fairly low GTP hydrolysis rate. Plays a role in control of the cell cycle, stress response, ribosome biogenesis and in those bacteria that undergo differentiation, in morphogenesis control. In Pseudoalteromonas atlantica (strain T6c / ATCC BAA-1087), this protein is GTPase Obg.